Here is a 309-residue protein sequence, read N- to C-terminus: Olfactory receptor 8B4 (309 aa).

Residues 1-25 (MTLRNSSSVTEFILVGLSEQPELQL) lie on the Extracellular side of the membrane. Residue Asn-5 is glycosylated (N-linked (GlcNAc...) asparagine). Residues 26–46 (PLFLLFLGIYVFTVVGNLGLI) form a helical membrane-spanning segment. Residues 47 to 54 (TLIGINPS) lie on the Cytoplasmic side of the membrane. The helical transmembrane segment at 55 to 75 (LHTPMYFFLFNLSFIDLCYSC) threads the bilayer. At 76–98 (VFTPKMLNDFVSESIISYVGCMT) the chain is on the extracellular side. A disulfide bridge links Cys-96 with Cys-188. Residues 99 to 119 (QLFFFCFFVNSECYVLVSMAY) form a helical membrane-spanning segment. The Cytoplasmic portion of the chain corresponds to 120 to 138 (DRYVAICNPLLYMVTMSPR). Residues 139–159 (VCFLLMFGSYVVGFAGAMAHT) form a helical membrane-spanning segment. Topologically, residues 160–196 (GSMLRLTFCDSNVIDHYLCDVLPLLQLSCTSTHVSEL) are extracellular. The chain crosses the membrane as a helical span at residues 197 to 216 (VFFIVVGVITMLSSISIVIS). The Cytoplasmic segment spans residues 217–236 (YALILSNILCIPSAEGRSKA). The helical transmembrane segment at 237-257 (FSTWGSHIIAVALFFGSGTFT) threads the bilayer. Over 258-270 (YLTTSFPGSMNHG) the chain is Extracellular. The helical transmembrane segment at 271–291 (RFASVFYTNVVPMLNPSIYSL) threads the bilayer. Residues 292 to 309 (RNKDDKLALGKTLKRVLF) lie on the Cytoplasmic side of the membrane.

Belongs to the G-protein coupled receptor 1 family.

It localises to the cell membrane. Its function is as follows. Odorant receptor. The protein is Olfactory receptor 8B4 (OR8B4) of Homo sapiens (Human).